A 116-amino-acid polypeptide reads, in one-letter code: Iron-sulfur cluster insertion protein ErpA (116 aa).

Positions 44, 108, and 110 each coordinate iron-sulfur cluster.

The protein belongs to the HesB/IscA family. As to quaternary structure, homodimer. Iron-sulfur cluster serves as cofactor.

Its function is as follows. Required for insertion of 4Fe-4S clusters for at least IspG. This is Iron-sulfur cluster insertion protein ErpA from Shewanella halifaxensis (strain HAW-EB4).